A 702-amino-acid chain; its full sequence is Methionine--tRNA ligase (702 aa).

A 'HIGH' region motif is present at residues 14 to 24; that stretch reads PYANGPVHLGH. Residues cysteine 146, cysteine 149, cysteine 159, and cysteine 162 each contribute to the Zn(2+) site. Residues 344-348 carry the 'KMSKS' region motif; sequence KFSKS. Lysine 347 contributes to the ATP binding site. The region spanning 601–702 is the tRNA-binding domain; sequence DFQKVDLRVA…GEKINGQSVQ (102 aa).

Belongs to the class-I aminoacyl-tRNA synthetase family. MetG type 1 subfamily. As to quaternary structure, homodimer. Zn(2+) is required as a cofactor.

Its subcellular location is the cytoplasm. The catalysed reaction is tRNA(Met) + L-methionine + ATP = L-methionyl-tRNA(Met) + AMP + diphosphate. Is required not only for elongation of protein synthesis but also for the initiation of all mRNA translation through initiator tRNA(fMet) aminoacylation. This is Methionine--tRNA ligase from Chlorobium luteolum (strain DSM 273 / BCRC 81028 / 2530) (Pelodictyon luteolum).